The chain runs to 294 residues: Probable 2-(5''-triphosphoribosyl)-3'-dephosphocoenzyme-A synthase (294 aa).

Belongs to the CitG/MdcB family.

It catalyses the reaction 3'-dephospho-CoA + ATP = 2'-(5''-triphospho-alpha-D-ribosyl)-3'-dephospho-CoA + adenine. The sequence is that of Probable 2-(5''-triphosphoribosyl)-3'-dephosphocoenzyme-A synthase from Streptococcus equi subsp. zooepidemicus (strain MGCS10565).